We begin with the raw amino-acid sequence, 38 residues long: Alpha-amylase (38 aa).

Belongs to the glycosyl hydrolase 13 family. Monomer. The cofactor is Ca(2+). Chloride is required as a cofactor. As to expression, expressed by the venom gland.

It localises to the secreted. The catalysed reaction is Endohydrolysis of (1-&gt;4)-alpha-D-glucosidic linkages in polysaccharides containing three or more (1-&gt;4)-alpha-linked D-glucose units.. The protein is Alpha-amylase of Tityus serrulatus (Brazilian scorpion).